The sequence spans 610 residues: UvrABC system protein C (610 aa).

The GIY-YIG domain occupies Ser-16–Val-94. The UVR domain occupies Gln-204 to Val-239.

This sequence belongs to the UvrC family. In terms of assembly, interacts with UvrB in an incision complex.

Its subcellular location is the cytoplasm. In terms of biological role, the UvrABC repair system catalyzes the recognition and processing of DNA lesions. UvrC both incises the 5' and 3' sides of the lesion. The N-terminal half is responsible for the 3' incision and the C-terminal half is responsible for the 5' incision. The sequence is that of UvrABC system protein C from Pectobacterium atrosepticum (strain SCRI 1043 / ATCC BAA-672) (Erwinia carotovora subsp. atroseptica).